The sequence spans 202 residues: S-modulin (202 aa).

Gly-2 carries the N-myristoyl glycine lipid modification. EF-hand domains follow at residues 25–60, 61–96, 97–132, and 147–182; these read QEEL…FPDA, DPKA…TSSG, KANQ…IFKM, and TPEK…NKEI. Residues Asp-74, Asn-76, Asp-78, Thr-80, Glu-85, Asp-110, Asp-112, Asn-114, Thr-116, and Glu-121 each coordinate Ca(2+).

Belongs to the recoverin family. The N-terminus is blocked.

Its function is as follows. Calcium-dependent regulator of light sensitivity of cGMP phosphodiesterase in rod outer segments. Controls rhodopsin phosphorylation in a Ca(2+)-dependent manner. The protein is S-modulin of Aquarana catesbeiana (American bullfrog).